We begin with the raw amino-acid sequence, 513 residues long: ATP synthase subunit alpha (513 aa).

Residue 169–176 (GDRQTGKT) coordinates ATP.

The protein belongs to the ATPase alpha/beta chains family. As to quaternary structure, F-type ATPases have 2 components, CF(1) - the catalytic core - and CF(0) - the membrane proton channel. CF(1) has five subunits: alpha(3), beta(3), gamma(1), delta(1), epsilon(1). CF(0) has three main subunits: a(1), b(2) and c(9-12). The alpha and beta chains form an alternating ring which encloses part of the gamma chain. CF(1) is attached to CF(0) by a central stalk formed by the gamma and epsilon chains, while a peripheral stalk is formed by the delta and b chains.

The protein localises to the cell inner membrane. It carries out the reaction ATP + H2O + 4 H(+)(in) = ADP + phosphate + 5 H(+)(out). Produces ATP from ADP in the presence of a proton gradient across the membrane. The alpha chain is a regulatory subunit. The chain is ATP synthase subunit alpha from Bordetella bronchiseptica (strain ATCC BAA-588 / NCTC 13252 / RB50) (Alcaligenes bronchisepticus).